The primary structure comprises 199 residues: Small ribosomal subunit protein uS5 (199 aa).

The segment at 1–29 is disordered; it reads MATAGRRGGAASERRERRESRRQEASPEK. The span at 12–27 shows a compositional bias: basic and acidic residues; it reads SERRERRESRRQEASP. The S5 DRBM domain maps to 32 to 95; the sequence is FLERVVTINR…EEAKKHFFTV (64 aa).

This sequence belongs to the universal ribosomal protein uS5 family. Part of the 30S ribosomal subunit. Contacts proteins S4 and S8.

With S4 and S12 plays an important role in translational accuracy. Its function is as follows. Located at the back of the 30S subunit body where it stabilizes the conformation of the head with respect to the body. In Acidothermus cellulolyticus (strain ATCC 43068 / DSM 8971 / 11B), this protein is Small ribosomal subunit protein uS5.